Consider the following 256-residue polypeptide: Imidazole glycerol phosphate synthase subunit HisF (256 aa).

Residues Asp12 and Asp131 contribute to the active site.

The protein belongs to the HisA/HisF family. Heterodimer of HisH and HisF.

The protein localises to the cytoplasm. The enzyme catalyses 5-[(5-phospho-1-deoxy-D-ribulos-1-ylimino)methylamino]-1-(5-phospho-beta-D-ribosyl)imidazole-4-carboxamide + L-glutamine = D-erythro-1-(imidazol-4-yl)glycerol 3-phosphate + 5-amino-1-(5-phospho-beta-D-ribosyl)imidazole-4-carboxamide + L-glutamate + H(+). The protein operates within amino-acid biosynthesis; L-histidine biosynthesis; L-histidine from 5-phospho-alpha-D-ribose 1-diphosphate: step 5/9. Its function is as follows. IGPS catalyzes the conversion of PRFAR and glutamine to IGP, AICAR and glutamate. The HisF subunit catalyzes the cyclization activity that produces IGP and AICAR from PRFAR using the ammonia provided by the HisH subunit. The sequence is that of Imidazole glycerol phosphate synthase subunit HisF from Pseudomonas fluorescens (strain SBW25).